The chain runs to 154 residues: Protein-export protein SecB (154 aa).

The protein belongs to the SecB family. As to quaternary structure, homotetramer, a dimer of dimers. One homotetramer interacts with 1 SecA dimer.

It localises to the cytoplasm. In terms of biological role, one of the proteins required for the normal export of preproteins out of the cell cytoplasm. It is a molecular chaperone that binds to a subset of precursor proteins, maintaining them in a translocation-competent state. It also specifically binds to its receptor SecA. This Vibrio parahaemolyticus serotype O3:K6 (strain RIMD 2210633) protein is Protein-export protein SecB.